The following is a 135-amino-acid chain: Glutaredoxin-C3 (135 aa).

The 109-residue stretch at Val26–Trp134 folds into the Glutaredoxin domain. Cysteines 46 and 49 form a disulfide. Residues Ala132–Leu135 carry the Responsive for interaction with TGA factors motif.

The protein belongs to the glutaredoxin family. CC-type subfamily.

It localises to the cytoplasm. The protein localises to the nucleus. Functionally, has a glutathione-disulfide oxidoreductase activity in the presence of NADPH and glutathione reductase. Reduces low molecular weight disulfides and proteins. In Oryza sativa subsp. japonica (Rice), this protein is Glutaredoxin-C3 (GRXC3).